Reading from the N-terminus, the 534-residue chain is Neryl diphosphate diphosphatase, chloroplastic (534 aa).

Asp272, Asp276, Asp416, and Glu424 together coordinate Mg(2+). The DDXXD motif motif lies at 272–276 (DDIFD).

Belongs to the terpene synthase family. Mg(2+) is required as a cofactor.

The protein resides in the plastid. Its subcellular location is the chloroplast. It carries out the reaction neryl diphosphate + H2O = nerol + diphosphate. It participates in secondary metabolite biosynthesis; terpenoid biosynthesis. In terms of biological role, monoterpene synthase that catalyzes the hydrolysis of neryl diphosphate (NPP) to form nerol and diphosphate. Is specific for NPP and has no hydrolase activity toward geranyl diphosphate (GPP) or farnesyl diphosphate (FPP). The monoterpene nerol may have an insect repellent effect for the plant leaves. In Glycine max (Soybean), this protein is Neryl diphosphate diphosphatase, chloroplastic.